Consider the following 944-residue polypeptide: E3 ubiquitin-protein ligase JMJ24 (944 aa).

2 disordered regions span residues 20-40 (QTRS…GIPD) and 77-103 (ANSA…YSEG). The WRC domain maps to 38 to 83 (IPDDLRCKRSDGKQWRCTAMSMADKTVCEKHYIQAKKRAANSAFRA). The short motif at 73 to 80 (KKRAANSA) is the Nuclear localization signal 1 element. The PHD-type; atypical zinc-finger motif lies at 217–269 (GEICHQCQRKDRERIISCLKCNQRAFCHNCLSARYSEISLEEVEKVCPACRGL). Zn(2+) is bound by residues Cys-220, Cys-223, Cys-234, Cys-237, Cys-243, Cys-246, Cys-263, and Cys-266. A Nuclear localization signal 2 motif is present at residues 323–330 (EKRLREVE). The JmjC domain maps to 621-873 (PRLGLLNVAA…ESARLAEEIR (253 aa)). The span at 685-703 (ERVRKTKPVPEEPDQKMSE) shows a compositional bias: basic and acidic residues. The tract at residues 685-715 (ERVRKTKPVPEEPDQKMSENESLLSPEQKLR) is disordered.

It belongs to the JARID1 histone demethylase family. Homodimer. Interacts with RDR2. Binds to CMT3. Associates with the E2 ubiquitin-conjugating enzyme UBC10. Self-ubiquitinates. Expressed in inflorescences, flowers, roots, siliques, leaves and stems, especially in the vasculature (mainly phloem), with highest levels in floral organs.

The protein resides in the nucleus. The enzyme catalyses S-ubiquitinyl-[E2 ubiquitin-conjugating enzyme]-L-cysteine + [acceptor protein]-L-lysine = [E2 ubiquitin-conjugating enzyme]-L-cysteine + N(6)-ubiquitinyl-[acceptor protein]-L-lysine.. In terms of biological role, binds histone H3 but seems to have lost demethylase activity probably due to its inability to bind iron Fe(2+). Possesses E3 ubiquitin ligase activity and targets directly CMT3 for proteasomal degradation to initiate destabilization of the heterochromatic state (e.g. CHG cytosine methylation and H3K9me2) of endogenous silenced loci. Required for the removal of repressive H3K9me2 histone marks to facilitate the transcription of AtSN1, AtMu1c, solo LTR and SDC, thus counteracting their transcriptional silencing. Mainly required to promote the basal level transcription of silenced loci such as TE and repeats targeted by RNA-dependent DNA methylation (RdDM) for silencing, a specialized branch of the RNA interference (RNAi) pathway. Also cooperates with RNAi pathways for gene silencing both by contributing to the production of 24-nt siRNA to initiate RdDM and by recruiting RDR2 to enable local transcripts to make dsRNA. Antagonizes histone H3K9 demethylase IBM1/JMJ25 function. The chain is E3 ubiquitin-protein ligase JMJ24 from Arabidopsis thaliana (Mouse-ear cress).